The primary structure comprises 931 residues: Isoleucine--tRNA ligase (931 aa).

Positions 58–68 (PYANGHLHCGH) match the 'HIGH' region motif. L-isoleucyl-5'-AMP is bound at residue Glu559. The short motif at 600-604 (KLSKS) is the 'KMSKS' region element. Lys603 is an ATP binding site. Zn(2+)-binding residues include Cys894, Cys897, Cys914, and Cys917.

Belongs to the class-I aminoacyl-tRNA synthetase family. IleS type 1 subfamily. Monomer. Zn(2+) serves as cofactor.

The protein localises to the cytoplasm. It catalyses the reaction tRNA(Ile) + L-isoleucine + ATP = L-isoleucyl-tRNA(Ile) + AMP + diphosphate. Its function is as follows. Catalyzes the attachment of isoleucine to tRNA(Ile). As IleRS can inadvertently accommodate and process structurally similar amino acids such as valine, to avoid such errors it has two additional distinct tRNA(Ile)-dependent editing activities. One activity is designated as 'pretransfer' editing and involves the hydrolysis of activated Val-AMP. The other activity is designated 'posttransfer' editing and involves deacylation of mischarged Val-tRNA(Ile). The protein is Isoleucine--tRNA ligase of Legionella pneumophila (strain Paris).